The primary structure comprises 731 residues: Dynein axonemal intermediate chain 7 (731 aa).

2 disordered regions span residues 1 to 50 (MPPK…NERL) and 285 to 320 (QNTE…VRSE). Composition is skewed to basic and acidic residues over residues 17–50 (KAEK…NERL) and 296–320 (GKME…VRSE).

The protein belongs to the DNAI7 family. As to quaternary structure, part of the multisubunit axonemal dynein complex formed at least of two heavy chains and a number of intermediate and light chains.

The protein resides in the cell projection. The protein localises to the cilium. Its subcellular location is the cytoplasm. Functionally, via its association with the multisubunit axonemal dynein complex, may be potentially involved in the regulation of cilia function. The sequence is that of Dynein axonemal intermediate chain 7 (dnai7) from Danio rerio (Zebrafish).